A 109-amino-acid polypeptide reads, in one-letter code: Nucleoid-associated protein Shal_1591 (109 aa).

The disordered stretch occupies residues 87-109 (NQKEKMAEVTGGMQLPPGMKMPF).

Belongs to the YbaB/EbfC family. In terms of assembly, homodimer.

It is found in the cytoplasm. Its subcellular location is the nucleoid. Functionally, binds to DNA and alters its conformation. May be involved in regulation of gene expression, nucleoid organization and DNA protection. The chain is Nucleoid-associated protein Shal_1591 from Shewanella halifaxensis (strain HAW-EB4).